A 376-amino-acid polypeptide reads, in one-letter code: Protein-tyrosine sulfotransferase 2 (376 aa).

The Cytoplasmic segment spans residues 1-8 (MRLSVRKV). A helical; Signal-anchor for type II membrane protein membrane pass occupies residues 9-25 (LLAVGCALALVLAVQLG). The Lumenal segment spans residues 26–376 (QQVLECRAVL…NSTSPHLGSS (351 aa)). 77 to 81 (RSGTT) is a 3'-phosphoadenylyl sulfate binding site. The cysteines at positions 95 and 155 are disulfide-linked. The active-site Proton donor/acceptor is the E98. Positions 100–104 (RIIPR) are interaction with peptide substrate. 3'-phosphoadenylyl sulfate is bound by residues R182, S190, and R194. A disulfide bridge links C224 with C232. Residues Y237, 284–293 (STDQVIKPVN), and K299 each bind 3'-phosphoadenylyl sulfate. N-linked (GlcNAc...) asparagine glycans are attached at residues N342 and N367.

The protein belongs to the protein sulfotransferase family. Homodimer. Can also form heterodimers with TPST1. Post-translationally, N-glycosylated.

It localises to the golgi apparatus membrane. It carries out the reaction L-tyrosyl-[protein] + 3'-phosphoadenylyl sulfate = O-sulfo-L-tyrosine-[protein] + adenosine 3',5'-bisphosphate + H(+). Catalyzes the O-sulfation of tyrosine residues within acidic motifs of polypeptides, using 3'-phosphoadenylyl sulfate (PAPS) as cosubstrate. This Rattus norvegicus (Rat) protein is Protein-tyrosine sulfotransferase 2 (Tpst2).